Consider the following 484-residue polypeptide: tRNA sulfurtransferase (484 aa).

The THUMP domain occupies 63–167 (KEMGERLTCM…DKRLFVIHSQ (105 aa)). ATP contacts are provided by residues 185–186 (LM), Lys267, Gly289, and Gln298. A disulfide bond links Cys346 and Cys457. Positions 405–483 (ALAGQIVIDI…GHANVRVYRP (79 aa)) constitute a Rhodanese domain. The active-site Cysteine persulfide intermediate is Cys457.

The protein belongs to the ThiI family.

It localises to the cytoplasm. It catalyses the reaction [ThiI sulfur-carrier protein]-S-sulfanyl-L-cysteine + a uridine in tRNA + 2 reduced [2Fe-2S]-[ferredoxin] + ATP + H(+) = [ThiI sulfur-carrier protein]-L-cysteine + a 4-thiouridine in tRNA + 2 oxidized [2Fe-2S]-[ferredoxin] + AMP + diphosphate. The enzyme catalyses [ThiS sulfur-carrier protein]-C-terminal Gly-Gly-AMP + S-sulfanyl-L-cysteinyl-[cysteine desulfurase] + AH2 = [ThiS sulfur-carrier protein]-C-terminal-Gly-aminoethanethioate + L-cysteinyl-[cysteine desulfurase] + A + AMP + 2 H(+). It participates in cofactor biosynthesis; thiamine diphosphate biosynthesis. Functionally, catalyzes the ATP-dependent transfer of a sulfur to tRNA to produce 4-thiouridine in position 8 of tRNAs, which functions as a near-UV photosensor. Also catalyzes the transfer of sulfur to the sulfur carrier protein ThiS, forming ThiS-thiocarboxylate. This is a step in the synthesis of thiazole, in the thiamine biosynthesis pathway. The sulfur is donated as persulfide by IscS. The protein is tRNA sulfurtransferase of Pseudomonas fluorescens (strain Pf0-1).